A 123-amino-acid chain; its full sequence is Large ribosomal subunit protein uL24 (123 aa).

Positions 100 to 123 (RRPDGSTYKAERSVRISRKTGKEI) are disordered.

The protein belongs to the universal ribosomal protein uL24 family. As to quaternary structure, part of the 50S ribosomal subunit.

One of two assembly initiator proteins, it binds directly to the 5'-end of the 23S rRNA, where it nucleates assembly of the 50S subunit. Its function is as follows. One of the proteins that surrounds the polypeptide exit tunnel on the outside of the subunit. This Nocardioides sp. (strain ATCC BAA-499 / JS614) protein is Large ribosomal subunit protein uL24.